A 30-amino-acid chain; its full sequence is Kappa-sparatoxin-Hv1b (30 aa).

Cystine bridges form between Cys3/Cys17, Cys10/Cys22, and Cys16/Cys26. At Trp30 the chain carries Tryptophan amide.

The protein belongs to the neurotoxin 10 (Hwtx-1) family. 19 (HpTX2) subfamily. In terms of tissue distribution, expressed by the venom gland.

Its subcellular location is the secreted. Inhibitor of voltage-gated potassium channels of the Kv4/KCND family. Inhibition of Kv4.3/KCND3 and Kv4.2/KCND2 is strongly voltage-dependent, while inhibition of Kv4.1/KCND1 shows less voltage-dependence. Its binding site may be near the potassium channel voltage sensor. Also blocks calcium channels. This is Kappa-sparatoxin-Hv1b from Heteropoda venatoria (Brown huntsman spider).